Consider the following 437-residue polypeptide: Putative permease IIC component (437 aa).

Positions 2-437 constitute a PTS EIIC type-2 domain; the sequence is FDYILSLGGT…LFLRKRELSE (436 aa). The next 12 membrane-spanning stretches (helical) occupy residues 5–25, 35–55, 88–108, 134–154, 173–193, 215–235, 236–256, 302–322, 325–345, 354–374, 385–405, and 410–430; these read ILSLGGTVFVPIIMIVIGLIF, AGVTVGIGFVGMGLVIVMAID, ATAIGAMIIPVIFLLNVAMLV, LMTGSLIYGVLGAICHAALSL, ISIPQGYGSSSVPLFVLLDAI, GMVGDPVIIGVVLGLIFGLAA, GEGFKGCASLMITVAAIMVLF, TIAVGLLLIPIMLILASILPG, VLPLADLPVAPFFICMATVIH, ISGVIVMITVLLIATQFAPYF, FAGESAQISALSVGNMFGWSI, and SLGIIGVVVAVGIVASVVLFL.

Its subcellular location is the cell inner membrane. Functionally, the phosphoenolpyruvate-dependent sugar phosphotransferase system (PTS), a major carbohydrate active -transport system, catalyzes the phosphorylation of incoming sugar substrates concomitant with their translocation across the cell membrane. This chain is Putative permease IIC component (sgcC), found in Escherichia coli (strain K12).